The primary structure comprises 167 residues: Leptin (167 aa).

The N-terminal stretch at 1–21 is a signal peptide; it reads MRCGPLCRFLWLWPYLSCVEA. Cysteine 117 and cysteine 167 are joined by a disulfide.

Belongs to the leptin family.

It localises to the secreted. Key player in the regulation of energy balance and body weight control. Once released into the circulation, has central and peripheral effects by binding LEPR, found in many tissues, which results in the activation of several major signaling pathways. In the hypothalamus, acts as an appetite-regulating factor that induces a decrease in food intake and an increase in energy consumption by inducing anorexinogenic factors and suppressing orexigenic neuropeptides, also regulates bone mass and secretion of hypothalamo-pituitary-adrenal hormones. In the periphery, increases basal metabolism, influences reproductive function, regulates pancreatic beta-cell function and insulin secretion, is pro-angiogenic for endothelial cell and affects innate and adaptive immunity. In the arcuate nucleus of the hypothalamus, activates by depolarization POMC neurons inducing FOS and SOCS3 expression to release anorexigenic peptides and inhibits by hyperpolarization NPY neurons inducing SOCS3 with a consequent reduction on release of orexigenic peptides. In addition to its known satiety inducing effect, has a modulatory role in nutrient absorption. In the intestine, reduces glucose absorption by enterocytes by activating PKC and leading to a sequential activation of p38, PI3K and ERK signaling pathways which exerts an inhibitory effect on glucose absorption. Acts as a growth factor on certain tissues, through the activation of different signaling pathways increases expression of genes involved in cell cycle regulation such as CCND1, via JAK2-STAT3 pathway, or VEGFA, via MAPK1/3 and PI3K-AKT1 pathways. May also play an apoptotic role via JAK2-STAT3 pathway and up-regulation of BIRC5 expression. Pro-angiogenic, has mitogenic activity on vascular endothelial cells and plays a role in matrix remodeling by regulating the expression of matrix metalloproteinases (MMPs) and tissue inhibitors of metalloproteinases (TIMPs). In innate immunity, modulates the activity and function of neutrophils by increasing chemotaxis and the secretion of oxygen radicals. Increases phagocytosis by macrophages and enhances secretion of pro-inflammatory mediators. Increases cytotoxic ability of NK cells. Plays a pro-inflammatory role, in synergy with IL1B, by inducing NOS2 which promotes the production of IL6, IL8 and Prostaglandin E2, through a signaling pathway that involves JAK2, PI3K, MAP2K1/MEK1 and MAPK14/p38. In adaptive immunity, promotes the switch of memory T-cells towards T helper-1 cell immune responses. Increases CD4(+)CD25(-) T-cell proliferation and reduces autophagy during TCR (T-cell receptor) stimulation, through MTOR signaling pathway activation and BCL2 up-regulation. The protein is Leptin (LEP) of Canis lupus familiaris (Dog).